The chain runs to 248 residues: Secreted and transmembrane protein 1 (248 aa).

Positions 1–28 (MQTCPLAFPGHVSQALGTLLFLAASLSA) are cleaved as a signal peptide. Residues 29–145 (QNEGWDSPIC…AEPQSAPDTG (117 aa)) are Extracellular-facing. The cysteines at positions 38 and 55 are disulfide-linked. Asn-56 carries N-linked (GlcNAc...) asparagine glycosylation. Residues 146–166 (FWPVPAVVTAVFILLVALVMF) traverse the membrane as a helical segment. At 167–248 (AWYRCRCSQQ…QPLFPYAADP (82 aa)) the chain is on the cytoplasmic side.

The protein belongs to the SECTM family. In terms of assembly, interacts with CD7. Detected at the highest levels in peripheral blood leukocytes and breast cancer cell lines. Found in leukocytes of the myeloid lineage, with the strongest expression observed in granulocytes and no detectable expression in lymphocytes. Expressed in thymic epithelial cells and fibroblasts.

It is found in the cell membrane. The protein localises to the secreted. Its function is as follows. May be involved in thymocyte signaling. The polypeptide is Secreted and transmembrane protein 1 (SECTM1) (Homo sapiens (Human)).